The chain runs to 522 residues: Type-2 serine--tRNA ligase (522 aa).

Ala-319 contributes to the L-serine binding site. Cys-321 lines the Zn(2+) pocket. Residue Arg-350 participates in L-serine binding. Residues 350–352 and 361–362 each bind ATP; these read RWE and RV. 367–369 serves as a coordination point for L-serine; the sequence is RIE. Glu-369 and Cys-476 together coordinate Zn(2+). Arg-483 lines the ATP pocket.

It belongs to the class-II aminoacyl-tRNA synthetase family. Type-2 seryl-tRNA synthetase subfamily. In terms of assembly, homodimer. It depends on Zn(2+) as a cofactor.

The protein localises to the cytoplasm. The enzyme catalyses tRNA(Ser) + L-serine + ATP = L-seryl-tRNA(Ser) + AMP + diphosphate + H(+). The catalysed reaction is tRNA(Sec) + L-serine + ATP = L-seryl-tRNA(Sec) + AMP + diphosphate + H(+). Its pathway is aminoacyl-tRNA biosynthesis; selenocysteinyl-tRNA(Sec) biosynthesis; L-seryl-tRNA(Sec) from L-serine and tRNA(Sec): step 1/1. Its function is as follows. Catalyzes the attachment of serine to tRNA(Ser). Is also able to aminoacylate tRNA(Sec) with serine, to form the misacylated tRNA L-seryl-tRNA(Sec), which will be further converted into selenocysteinyl-tRNA(Sec). The protein is Type-2 serine--tRNA ligase (serS) of Methanococcus aeolicus (strain ATCC BAA-1280 / DSM 17508 / OCM 812 / Nankai-3).